Reading from the N-terminus, the 184-residue chain is Large ribosomal subunit protein uL5 (184 aa).

It belongs to the universal ribosomal protein uL5 family. As to quaternary structure, part of the 50S ribosomal subunit; part of the 5S rRNA/L5/L18/L25 subcomplex. Contacts the 5S rRNA and the P site tRNA. Forms a bridge to the 30S subunit in the 70S ribosome.

Functionally, this is one of the proteins that bind and probably mediate the attachment of the 5S RNA into the large ribosomal subunit, where it forms part of the central protuberance. In the 70S ribosome it contacts protein S13 of the 30S subunit (bridge B1b), connecting the 2 subunits; this bridge is implicated in subunit movement. Contacts the P site tRNA; the 5S rRNA and some of its associated proteins might help stabilize positioning of ribosome-bound tRNAs. The polypeptide is Large ribosomal subunit protein uL5 (Wolinella succinogenes (strain ATCC 29543 / DSM 1740 / CCUG 13145 / JCM 31913 / LMG 7466 / NCTC 11488 / FDC 602W) (Vibrio succinogenes)).